The following is a 616-amino-acid chain: Zinc metalloproteinase-disintegrin-like protein H3 (616 aa).

The first 20 residues, 1 to 20 (MIQVLLVIICLAVFPYQGSS), serve as a signal peptide directing secretion. Positions 21 to 193 (IILESGNVND…KKASQLNLTP (173 aa)) are excised as a propeptide. Pyrrolidone carboxylic acid (Glu) is present on Glu194. The region spanning 203-399 (KYIKLVIVAD…KMPQCILNKP (197 aa)) is the Peptidase M12B domain. Disulfide bonds link Cys314–Cys394, Cys354–Cys378, and Cys356–Cys361. Residue His339 participates in Zn(2+) binding. The Metal-binding motif lies at 339–350 (HEMGHNLGMDHD). Glu340 serves as the catalytic Proton acceptor. Residues His343 and His349 each contribute to the Zn(2+) site. N-linked (GlcNAc...) asparagine glycosylation is present at Asn377. The region spanning 407–493 (PAVCGNYLVE…ECPTDQFQRN (87 aa)) is the Disintegrin domain. Residues Val409, Asn412, Glu416, Glu419, and Asp422 each coordinate Ca(2+). Disulfide bonds link Cys410–Cys439, Cys421–Cys434, Cys423–Cys429, Cys433–Cys456, Cys447–Cys453, Cys452–Cys478, Cys465–Cys485, Cys472–Cys504, Cys497–Cys509, Cys516–Cys566, Cys531–Cys577, Cys544–Cys554, Cys561–Cys603, and Cys597–Cys609. The D/ECD-tripeptide signature appears at 471–473 (ECD). Ca(2+) contacts are provided by Asp473, Asp476, and Asp488. Asn506 carries N-linked (GlcNAc...) asparagine glycosylation.

The protein belongs to the venom metalloproteinase (M12B) family. P-III subfamily. P-IIIc sub-subfamily. Homodimer; disulfide-linked. Requires Zn(2+) as cofactor. N-glycosylated. In terms of processing, the N-terminus is blocked. As to expression, expressed by the venom gland (at protein level). Expressed by the venom gland.

Its subcellular location is the secreted. The proteolytic activity requires Zn(2+) and Ca(2+) ions. The alpha-fibrinogenase activity is completely inhibited by EDTA, but not by PMSF. In terms of biological role, zinc metalloprotease that has fibrinogenolytic and hemorrhagic activities. Cleaves insulin B chain readily at '38-Ala-|-Leu-39' bond, and at a significantly slower rate, at '40-Tyr-|-Leu-41' bond. Hydrolyzes isolated extracellular matrix (ECM) bovine fibronectin, and basal membrane (BM) proteins human collagen IV and, to a lesser extent, murine laminin, in vitro. Cleaves murine nidogen (at '350-Ser-|-Phe-351' and '380-Tyr-|-Asn-381' bonds), but not laminin, in a solubilized BM preparation. Hydrolyzes plasma proteins involved in blood coagulation in vitro. It significantly prolongs thrombin time. Has potent alpha-fibrinogenase activity cleaving human fibrinogen alpha chain at '432-Lys-|-Leu-433' bond, but does not cleave beta or gamma chains. Hydrolyzes bovine prothrombin, but does not cleave it at '366-Arg-|-Ile-367' bond, which is necessary for the formation of active alpha-thrombin, however, the cleavage of fragment 1 from it leads to reduced alpha-thrombin formation. Hydrolyzes bovine factor X heavy chain at '211-Ser-|-Leu-212', '213-Asp-|-Leu-214' and '216-Gly-|-Leu-217' bonds activating it only marginally as does not cleave at the physiological activation site. Does not cleave factor X light chain. No hydrolysis or activation of plasminogen. The alpha-fibrinogenase activity likely contributes to its hemorrhagic activity, which in rat can be completely neutralized in vivo by anti-ammodytagin antibodies, which strongly cross-react with this protein. Has very weak collagen-, ADP- and ristocetin-induced platelet aggregation inhibition activity in vitro. This Vipera ammodytes ammodytes (Western sand viper) protein is Zinc metalloproteinase-disintegrin-like protein H3.